The primary structure comprises 226 residues: MTSKTTASLLAICVACAASAIAGTALCADRRNAPAQAGAGAAAAVSGDAHEQPAAEAPAEEEEETPAVAATDGKLVLPNGQDITPDHMENGRWYTAEDIPTYKIAEEGAVDWATFSGYRRYSAECHVCHGPDGEGSTYAPALRKSVLTMGYYDFLEIAASGKQEVNTAANLVMPAFGTNKNVWCYIDDIYAYLLARGTGDLPRGRPAKREDKSDEFVAQEDSCMSG.

The signal sequence occupies residues 1-22 (MTSKTTASLLAICVACAASAIA). The interval 43–68 (AAVSGDAHEQPAAEAPAEEEEETPAV) is disordered. 4 residues coordinate heme: Cys125, Cys128, His129, and Met173. Positions 203–226 (RGRPAKREDKSDEFVAQEDSCMSG) are disordered.

Post-translationally, binds 1 heme group per subunit.

It is found in the periplasm. This is Cytochrome c-553I (cycB) from Paracoccus denitrificans.